A 382-amino-acid chain; its full sequence is Regulatory protein RapC (382 aa).

TPR repeat units follow at residues 102–138 (YYVN…VADH), 149–182 (AEAY…NVRI), 183–216 (IQCH…AQAE), 223–256 (GRAY…FESS), and 263–296 (PQAY…AKET).

Belongs to the Rap family. As to quaternary structure, homodimer. Interacts specifically with the C-terminal DNA-binding domain of ComA. Interacts with CSF.

Its subcellular location is the cytoplasm. Its activity is regulated as follows. Inhibited by the competence and sporulation stimulating factor (CSF), encoded by phrC, which prevents RapC-ComA interaction. Involved in the regulation of genetic competence development. Inhibits the activity of ComA, a transcriptional factor that regulates the development of genetic competence. Acts by binding to ComA, independently of its phosphorylation state, leading to the inhibition of ComA DNA-binding activity. Does not dephosphorylate phospho-ComA and does not affect the phosphorylation level of the ComP-ComA system. This is Regulatory protein RapC (rapC) from Bacillus subtilis (strain 168).